A 572-amino-acid chain; its full sequence is Proline--tRNA ligase (572 aa).

It belongs to the class-II aminoacyl-tRNA synthetase family. ProS type 1 subfamily. As to quaternary structure, homodimer.

It localises to the cytoplasm. It carries out the reaction tRNA(Pro) + L-proline + ATP = L-prolyl-tRNA(Pro) + AMP + diphosphate. In terms of biological role, catalyzes the attachment of proline to tRNA(Pro) in a two-step reaction: proline is first activated by ATP to form Pro-AMP and then transferred to the acceptor end of tRNA(Pro). As ProRS can inadvertently accommodate and process non-cognate amino acids such as alanine and cysteine, to avoid such errors it has two additional distinct editing activities against alanine. One activity is designated as 'pretransfer' editing and involves the tRNA(Pro)-independent hydrolysis of activated Ala-AMP. The other activity is designated 'posttransfer' editing and involves deacylation of mischarged Ala-tRNA(Pro). The misacylated Cys-tRNA(Pro) is not edited by ProRS. In Yersinia enterocolitica serotype O:8 / biotype 1B (strain NCTC 13174 / 8081), this protein is Proline--tRNA ligase.